The chain runs to 198 residues: Probable chemoreceptor glutamine deamidase CheD (198 aa).

The protein belongs to the CheD family.

It carries out the reaction L-glutaminyl-[protein] + H2O = L-glutamyl-[protein] + NH4(+). Functionally, probably deamidates glutamine residues to glutamate on methyl-accepting chemotaxis receptors (MCPs), playing an important role in chemotaxis. This chain is Probable chemoreceptor glutamine deamidase CheD, found in Xanthomonas axonopodis pv. citri (strain 306).